A 624-amino-acid polypeptide reads, in one-letter code: (-)-beta-phellandrene synthase 2, chloroplastic (624 aa).

The transit peptide at 1–48 (MAIVSSVPLASKSCLHKSLISSIHKLKPFCRTIPTLGMSRPGKYVMPS) directs the protein to the chloroplast. Residues D375, D379, and D527 each coordinate Mg(2+). The DDXXD motif motif lies at 375–379 (DDMYD).

This sequence belongs to the terpene synthase family. Tpsd subfamily. Requires Mg(2+) as cofactor. Mn(2+) serves as cofactor.

The protein resides in the plastid. It localises to the chloroplast. The enzyme catalyses (2E)-geranyl diphosphate = (-)-beta-phellandrene + diphosphate. The protein operates within terpene metabolism; oleoresin biosynthesis. In terms of biological role, terpene synthase (TPS) involved in the biosynthesis of monoterpene natural products included in conifer oleoresin secretions and volatile emissions; these compounds contribute to biotic and abiotic stress defense against herbivores and pathogens. Catalyzes the conversion of (2E)-geranyl diphosphate (GPP) to (-)-beta-phellandrene. This Picea sitchensis (Sitka spruce) protein is (-)-beta-phellandrene synthase 2, chloroplastic.